The chain runs to 541 residues: MGIHSLLYCERLFYLEEVEGILVADDRVYAGRTLHEELEPNEDSSGRIESFHYTSEKLEVSGKVDRIQKRDGDWIPYEHKRGRARIGTNGPEAWESDQCQVTVYALLLEEATGRNISEGKIRYHGSKDLVKIEIDEELRSKALKTIDRAKGLSTSTNRPPVAQNENLCKNCSLAPVCLPEETRVITENEYEPIRLFPEKREKTTLHVFGHDSRIKKSDNVLLVEKVTETGEKSKSEKIPIQEIESVNIHGNCQISSQMIKFLVSEEIPVHWFSGGGNYIGGININPSGVQRRIRQFKALTKETIRLNLAKKLVSAKCESQLRYLLRATRGKDETRNETESYLATIRSGLKNIESADSPSQLLGIEGSSARAYFSGLPALLKNSDPFLVPNGRSKRPPKDPFNATLSFLYSLLYKSVRQAIIAVGLDPSFGFYHTPRSSAEPLVLDLMELFRVSLCDMTLIGSINRKSWIDEDFEITKNKVWLSESGRKKATQLYETRLDDTWKHPVVNYSLSYYRMIELEVRLLEKEWSGEANIFAQARLR.

The segment at M1–P179 is CRISPR-associated exonuclease Cas4. Position 9 (C9) interacts with [4Fe-4S] cluster. Positions 65 and 78 each coordinate Mn(2+). [4Fe-4S] cluster contacts are provided by C168, C171, and C177. The segment at T204–R541 is CRISPR-associated endonuclease Cas1. Residues E365, H433, and E448 each coordinate Mn(2+).

It in the N-terminal section; belongs to the CRISPR-associated exonuclease Cas4 family. This sequence in the C-terminal section; belongs to the CRISPR-associated endonuclease Cas1 family. In terms of assembly, homodimer, forms a heterotetramer with a Cas2 homodimer. The cofactor is [4Fe-4S] cluster. Requires Mg(2+) as cofactor. Mn(2+) is required as a cofactor.

The catalysed reaction is exonucleolytic cleavage in the 5'- to 3'-direction to yield nucleoside 3'-phosphates.. Functionally, CRISPR (clustered regularly interspaced short palindromic repeat), is an adaptive immune system that provides protection against mobile genetic elements (viruses, transposable elements and conjugative plasmids). CRISPR clusters contain spacers, sequences complementary to antecedent mobile elements, and target invading nucleic acids. CRISPR clusters are transcribed and processed into CRISPR RNA (crRNA). The Cas4 region acts as a ssDNA exonuclease, while the Cas1 region acts as a dsDNA endonuclease. Involved in the integration of spacer DNA into the CRISPR cassette. This Leptospira interrogans serogroup Icterohaemorrhagiae serovar Lai (strain 56601) protein is CRISPR-associated exonuclease Cas4/endonuclease Cas1 fusion (cas4-cas1).